A 567-amino-acid chain; its full sequence is Arginine--tRNA ligase (567 aa).

A 'HIGH' region motif is present at residues 128–138 (ANPTGPLHVGH).

This sequence belongs to the class-I aminoacyl-tRNA synthetase family. In terms of assembly, monomer.

The protein resides in the cytoplasm. It catalyses the reaction tRNA(Arg) + L-arginine + ATP = L-arginyl-tRNA(Arg) + AMP + diphosphate. In Acidovorax ebreus (strain TPSY) (Diaphorobacter sp. (strain TPSY)), this protein is Arginine--tRNA ligase.